A 253-amino-acid polypeptide reads, in one-letter code: Precorrin-4 C(11)-methyltransferase (253 aa).

Belongs to the precorrin methyltransferase family.

The enzyme catalyses precorrin-4 + S-adenosyl-L-methionine = precorrin-5 + S-adenosyl-L-homocysteine. It participates in cofactor biosynthesis; adenosylcobalamin biosynthesis; cob(II)yrinate a,c-diamide from precorrin-2 (aerobic route): step 4/10. Functionally, catalyzes the methylation of C-11 in precorrin-4 to form precorrin-5. The sequence is that of Precorrin-4 C(11)-methyltransferase (cobM) from Sinorhizobium sp.